The chain runs to 153 residues: Aspartate carbamoyltransferase regulatory chain (153 aa).

The Zn(2+) site is built by cysteine 109, cysteine 114, cysteine 138, and cysteine 141.

Belongs to the PyrI family. Contains catalytic and regulatory chains. Zn(2+) serves as cofactor.

Involved in allosteric regulation of aspartate carbamoyltransferase. The chain is Aspartate carbamoyltransferase regulatory chain from Salmonella paratyphi A (strain ATCC 9150 / SARB42).